Here is a 274-residue protein sequence, read N- to C-terminus: MSNDALEAAIESAWEIRDQITPATRGEVRDAVEATLEALDKGVLRVAEKRGSDWHVNQWAKKAVLLGFRLKDMEVHMGGPQGGTWWDKVDSKFAHWGEAQWQAAGFRAVPNCVVRRSAYIAKGVVLMPSFVNLGAYVDEGTMVDTWATVGSCAQIGKNVHLSGGVGIGGVLEPMQAGPTIIEDNCFIGARSEVVEGCIVREGSVLGMGVFIGKSTKIVDRETGEVMYGEVPAGSVVVAGSMPSKNGVNLYCAVIVKRVDAQTRSKTSINELLRD.

Residues R107 and D144 each contribute to the substrate site.

It belongs to the transferase hexapeptide repeat family. Homotrimer.

Its subcellular location is the cytoplasm. It carries out the reaction (S)-2,3,4,5-tetrahydrodipicolinate + succinyl-CoA + H2O = (S)-2-succinylamino-6-oxoheptanedioate + CoA. Its pathway is amino-acid biosynthesis; L-lysine biosynthesis via DAP pathway; LL-2,6-diaminopimelate from (S)-tetrahydrodipicolinate (succinylase route): step 1/3. The protein is 2,3,4,5-tetrahydropyridine-2,6-dicarboxylate N-succinyltransferase of Paracoccus denitrificans (strain Pd 1222).